The chain runs to 197 residues: Scoloptoxin SSD20 (197 aa).

The first 6 residues, 1–6 (PPMTTE), serve as a signal peptide directing secretion.

In terms of tissue distribution, expressed by the venom gland.

Its subcellular location is the secreted. Its function is as follows. May act as a voltage-gated potassium channel inhibitor. Is highly similar to the subunit beta of SSD14 which, when complexed with subunit alpha, induces platelet aggregation and hemolysis. This is Scoloptoxin SSD20 from Scolopendra dehaani (Thai centipede).